A 101-amino-acid polypeptide reads, in one-letter code: Apolipoprotein C-II (101 aa).

A signal peptide spans 1-22 (MGIRYLLVLVLVLLVLGCEVQG). A lipid binding region spans residues 66 to 74 (TMDEKIREI). The tract at residues 78-101 (STAAVSTYAGIFTDQLLSMLKGDQ) is lipoprotein lipase cofactor.

The protein belongs to the apolipoprotein C2 family. Post-translationally, proapolipoprotein C-II is synthesized as a sialic acid containing glycoprotein which is subsequently desialylated prior to its proteolytic processing. Proapolipoprotein C-II, the major form found in plasma undergoes proteolytic cleavage of its N-terminal hexapeptide to generate apolipoprotein C-II, which occurs as the minor form in plasma.

The protein localises to the secreted. Component of chylomicrons, very low-density lipoproteins (VLDL), low-density lipoproteins (LDL), and high-density lipoproteins (HDL) in plasma. Plays an important role in lipoprotein metabolism as an activator of lipoprotein lipase. Both proapolipoprotein C-II and apolipoprotein C-II can activate lipoprotein lipase. This Leptonychotes weddellii (Weddell seal) protein is Apolipoprotein C-II (APOC2).